We begin with the raw amino-acid sequence, 233 residues long: Uracil-DNA glycosylase (233 aa).

The active-site Proton acceptor is Asp-70.

This sequence belongs to the uracil-DNA glycosylase (UDG) superfamily. UNG family.

It localises to the cytoplasm. It catalyses the reaction Hydrolyzes single-stranded DNA or mismatched double-stranded DNA and polynucleotides, releasing free uracil.. Its function is as follows. Excises uracil residues from the DNA which can arise as a result of misincorporation of dUMP residues by DNA polymerase or due to deamination of cytosine. The sequence is that of Uracil-DNA glycosylase from Oleidesulfovibrio alaskensis (strain ATCC BAA-1058 / DSM 17464 / G20) (Desulfovibrio alaskensis).